The primary structure comprises 608 residues: Albumin (608 aa).

Residues 1-18 form the signal peptide; sequence MKWVTFISLLLLFSSAYS. Residues 19–24 constitute a propeptide that is removed on maturation; that stretch reads RGVTRR. Albumin domains are found at residues 19–210, 211–403, and 404–601; these read RGVT…DALR, EKVL…EFKP, and LVEE…KLVA. His27 provides a ligand contact to Cu cation. Ser29 is subject to Phosphoserine. Residues Glu30 and Asp37 each contribute to the Ca(2+) site. A disulfide bridge links Cys77 with Cys86. Ser82 and Ser89 each carry phosphoserine. Residue His91 coordinates Zn(2+). Disulfide bonds link Cys99–Cys115, Cys114–Cys125, Cys148–Cys193, Cys192–Cys201, Cys224–Cys270, and Cys269–Cys277. Lys229 carries the N6-succinyllysine modification. Ca(2+) is bound at residue Glu268. Residues His271 and Asp273 each coordinate Zn(2+). Positions 273, 276, 279, and 283 each coordinate Ca(2+). 8 disulfide bridges follow: Cys289/Cys303, Cys302/Cys313, Cys340/Cys385, Cys384/Cys393, Cys416/Cys462, Cys461/Cys472, Cys485/Cys501, and Cys500/Cys511. At Ser443 the chain carries Phosphoserine. A phosphothreonine mark is found at Thr444 and Thr446. At Lys460 the chain carries N6-succinyllysine. Ser513 carries the phosphoserine modification. Disulfide bonds link Cys538-Cys583 and Cys582-Cys591. The residue at position 558 (Lys558) is an N6-methyllysine. The residue at position 570 (Thr570) is a Phosphothreonine. Lys588 bears the N6-succinyllysine mark.

This sequence belongs to the ALB/AFP/VDB family. As to quaternary structure, interacts with FCGRT; this interaction regulates ALB homeostasis. Interacts with TASOR. In plasma, occurs in a covalently-linked complex with chromophore-bound alpha-1-microglobulin; this interaction does not prevent fatty acid binding to ALB. In terms of processing, phosphorylated by FAM20C in the extracellular medium. In terms of tissue distribution, plasma.

Its subcellular location is the secreted. Its function is as follows. Binds water, Ca(2+), Na(+), K(+), fatty acids, hormones, bilirubin and drugs. Its main function is the regulation of the colloidal osmotic pressure of blood. Major zinc transporter in plasma, typically binds about 80% of all plasma zinc. Major calcium and magnesium transporter in plasma, binds approximately 45% of circulating calcium and magnesium in plasma. Potentially has more than two calcium-binding sites and might additionally bind calcium in a non-specific manner. The shared binding site between zinc and calcium at residue Asp-273 suggests a crosstalk between zinc and calcium transport in the blood. The rank order of affinity is zinc &gt; calcium &gt; magnesium. Binds to the bacterial siderophore enterobactin and inhibits enterobactin-mediated iron uptake of E.coli from ferric transferrin, and may thereby limit the utilization of iron and growth of enteric bacteria such as E.coli. Does not prevent iron uptake by the bacterial siderophore aerobactin. The chain is Albumin (ALB) from Felis catus (Cat).